A 401-amino-acid chain; its full sequence is tRNA(Ile)-lysidine synthase (401 aa).

17-22 (SGGPDS) is a binding site for ATP.

The protein belongs to the tRNA(Ile)-lysidine synthase family.

The protein resides in the cytoplasm. The catalysed reaction is cytidine(34) in tRNA(Ile2) + L-lysine + ATP = lysidine(34) in tRNA(Ile2) + AMP + diphosphate + H(+). Ligates lysine onto the cytidine present at position 34 of the AUA codon-specific tRNA(Ile) that contains the anticodon CAU, in an ATP-dependent manner. Cytidine is converted to lysidine, thus changing the amino acid specificity of the tRNA from methionine to isoleucine. The polypeptide is tRNA(Ile)-lysidine synthase (Mycoplasma mycoides subsp. mycoides SC (strain CCUG 32753 / NCTC 10114 / PG1)).